A 1133-amino-acid polypeptide reads, in one-letter code: Nuclear pore complex-interacting protein family member B5 (1133 aa).

A helical membrane pass occupies residues 60–84 (WLHVIIAFPTSYKVVITLWIVYLWV). 3 disordered regions span residues 241-262 (NRMGHQPPPPTQQHSITDNSLS), 290-575 (LTPL…IKTP), and 868-1133 (ERLR…RRLS). Polar residues predominate over residues 252-262 (QQHSITDNSLS). Residues 349 to 359 (PLPPSALPSAP) are compositionally biased toward pro residues. Basic and acidic residues-rich tracts occupy residues 406-416 (DNIKTPAERLR), 448-458 (DNIKTPAERLR), 490-500 (DNIKTPAERLR), 528-538 (DNIKTPAERLR), 903-913 (DNIKTPAERLR), 945-955 (DNIKTPAERLR), and 987-997 (DNIKTPAERLR).

The protein belongs to the NPIP family.

It is found in the membrane. The polypeptide is Nuclear pore complex-interacting protein family member B5 (NPIPB5) (Homo sapiens (Human)).